The sequence spans 101 residues: Small ribosomal subunit protein uS14A (101 aa).

Belongs to the universal ribosomal protein uS14 family. Part of the 30S ribosomal subunit. Contacts proteins S3 and S10.

Binds 16S rRNA, required for the assembly of 30S particles and may also be responsible for determining the conformation of the 16S rRNA at the A site. This chain is Small ribosomal subunit protein uS14A, found in Mycolicibacterium smegmatis (strain ATCC 700084 / mc(2)155) (Mycobacterium smegmatis).